Reading from the N-terminus, the 141-residue chain is 6,7-dimethyl-8-ribityllumazine synthase (141 aa).

5-amino-6-(D-ribitylamino)uracil contacts are provided by residues Phe-14, 46–48, and 70–72; these read VFD and CVI. 75–76 lines the (2S)-2-hydroxy-3-oxobutyl phosphate pocket; the sequence is ET. His-78 functions as the Proton donor in the catalytic mechanism. Residue Leu-103 participates in 5-amino-6-(D-ribitylamino)uracil binding. Residue Arg-118 coordinates (2S)-2-hydroxy-3-oxobutyl phosphate.

In terms of assembly, forms an icosahedral capsid composed of 60 subunits, arranged as a dodecamer of pentamers.

The enzyme catalyses (2S)-2-hydroxy-3-oxobutyl phosphate + 5-amino-6-(D-ribitylamino)uracil = 6,7-dimethyl-8-(1-D-ribityl)lumazine + phosphate + 2 H2O + H(+). It functions in the pathway cofactor biosynthesis; riboflavin biosynthesis; riboflavin from 2-hydroxy-3-oxobutyl phosphate and 5-amino-6-(D-ribitylamino)uracil: step 1/2. Catalyzes the formation of 6,7-dimethyl-8-ribityllumazine by condensation of 5-amino-6-(D-ribitylamino)uracil with 3,4-dihydroxy-2-butanone 4-phosphate. This is the penultimate step in the biosynthesis of riboflavin. This Methanocaldococcus jannaschii (strain ATCC 43067 / DSM 2661 / JAL-1 / JCM 10045 / NBRC 100440) (Methanococcus jannaschii) protein is 6,7-dimethyl-8-ribityllumazine synthase (ribH).